A 966-amino-acid chain; its full sequence is Collagen alpha-1(I) chain (966 aa).

The disordered stretch occupies residues 1-966; sequence SYGYDEKSAG…PGPPGPPGPP (966 aa). Allysine is present on Lys-7. Ser-8 carries the post-translational modification Phosphoserine. A 4-hydroxyproline mark is found at Pro-27, Pro-30, Pro-32, Pro-41, Pro-44, Pro-47, Pro-61, Pro-76, Pro-82, Pro-91, and Pro-97. The segment covering 64–78 has biased composition (basic and acidic residues); it reads NGDDGEAGKPGRPGE. Lys-100 bears the 5-hydroxylysine; alternate mark. O-linked (Gal...) hydroxylysine; alternate glycosylation is present at Lys-100. Residue Ser-106 is modified to Phosphoserine. Over residues 114–130 the composition is skewed to low complexity; that stretch reads DAGPAGPKGEPGSPGEN. 4-hydroxyproline is present on residues Pro-124, Pro-127, Pro-133, Pro-142, Pro-148, Pro-169, Pro-178, Pro-181, Pro-208, Pro-211, Pro-223, Pro-229, Pro-238, Pro-244, Pro-247, and Pro-262. Positions 148–166 are enriched in low complexity; sequence PGASGPAGARGNDGATGAA. The segment covering 168 to 180 has biased composition (pro residues); it reads PPGPTGPAGPPGF. The segment covering 214-253 has biased composition (low complexity); the sequence is AGAAGPAGNPGADGQPGAKGANGAPGIAGAPGFPGARGPS. Lys-265 carries the post-translational modification 5-hydroxylysine. 4-hydroxyproline occurs at positions 271, 274, 286, 295, 310, 316, 325, and 331. Positions 320-329 are enriched in gly residues; that stretch reads GERGGPGSRG. Lys-340 is modified (5-hydroxylysine). 4-hydroxyproline occurs at positions 349, 358, 364, 370, 379, 382, 391, 400, 406, 418, 427, 436, 439, 457, 475, 481, 487, 493, 499, 505, 517, 526, 538, 542, 548, 554, and 563. Positions 373–399 are enriched in low complexity; the sequence is KGLTGSPGSPGPDGKTGPPGPAGQDGR. Residues 408 to 427 are compositionally biased toward low complexity; sequence ARGQAGVMGFPGPKGAAGEP. Residues 469–496 show a composition bias toward low complexity; the sequence is QGPAGSPGFQGLPGPAGPPGEAGKPGEQ. Lys-575 bears the 5-hydroxylysine mark. 4-hydroxyproline occurs at positions 581, 596, and 602. Residues 608-622 are compositionally biased toward low complexity; that stretch reads SGPSGPAGPTGARGA. The residue at position 611 (Ser-611) is a Phosphoserine. 4-hydroxyproline is present on residues Pro-623, Pro-629, Pro-632, Pro-641, Pro-647, Pro-665, Pro-674, and Pro-683. A compositionally biased stretch (low complexity) spans 635-662; it reads AGFAGPPGADGQPGAKGEPGDAGAKGDA. Residues 664–676 are compositionally biased toward pro residues; that stretch reads PPGPAGPTGPPGP. 5-hydroxylysine is present on Lys-686. Over residues 691-707 the composition is skewed to low complexity; sequence SAGPPGATGFPGAAGRV. A 4-hydroxyproline mark is found at Pro-695 and Pro-701. The residue at position 709 (Pro-709) is a 3-hydroxyproline. Pro-710, Pro-719, Pro-722, Pro-746, Pro-755, Pro-773, Pro-782, Pro-785, Pro-791, Pro-806, Pro-812, Pro-818, Pro-826, and Pro-832 each carry 4-hydroxyproline. The segment covering 736–755 has biased composition (low complexity); the sequence is ETGPAGEKGSPGADGPAGAP. Pro residues predominate over residues 805–815; the sequence is PPGPVGPPGLA. Over residues 824–835 the composition is skewed to gly residues; it reads EGPGAEGSPGRG. Positions 852–866 are enriched in low complexity; that stretch reads AGPAGARGPAGPQGP. Basic and acidic residues predominate over residues 867-881; it reads RGDKGETGEQGDRGI. A 5-hydroxylysine modification is found at Lys-870. Lys-882 is subject to 5-hydroxylysine; alternate. Lys-882 is a glycosylation site (O-linked (Gal...) hydroxylysine; alternate). Residues Pro-897, Pro-900, Pro-918, and Pro-933 each carry the 4-hydroxyproline modification. Over residues 900–933 the composition is skewed to low complexity; it reads PGEQGPSGASGPAGPRGPPGSAGSPGKDGLNGLP. At Pro-938 the chain carries 3-hydroxyproline. Pro-939 is modified (4-hydroxyproline). A compositionally biased stretch (pro residues) spans 951 to 966; that stretch reads VGPPGPPGPPGPPGPP. At Pro-953 the chain carries 3-hydroxyproline. A 4-hydroxyproline modification is found at Pro-954. Pro-956 carries the 3-hydroxyproline modification. 4-hydroxyproline is present on Pro-957. Pro-959 carries the post-translational modification 3-hydroxyproline. 3 positions are modified to 4-hydroxyproline: Pro-960, Pro-963, and Pro-966.

It belongs to the fibrillar collagen family. As to quaternary structure, trimers of one alpha 2(I) and two alpha 1(I) chains. Post-translationally, contains mostly 4-hydroxyproline. Proline residues at the third position of the tripeptide repeating unit (G-X-Y) are hydroxylated in some or all of the chains. Contains 3-hydroxyproline at a few sites. This modification occurs on the first proline residue in the sequence motif Gly-Pro-Hyp, where Hyp is 4-hydroxyproline. In terms of processing, lysine residues at the third position of the tripeptide repeating unit (G-X-Y) are 5-hydroxylated in some or all of the chains. Post-translationally, O-glycosylated on hydroxylated lysine residues. The O-linked glycan consists of a Glc-Gal disaccharide. As to expression, expressed in bones.

The protein resides in the secreted. It is found in the extracellular space. The protein localises to the extracellular matrix. Type I collagen is a member of group I collagen (fibrillar forming collagen). The sequence is that of Collagen alpha-1(I) chain from Bradypus variegatus (Brown-throated three-fingered sloth).